Here is a 122-residue protein sequence, read N- to C-terminus: Large ribosomal subunit protein bL12 (122 aa).

This sequence belongs to the bacterial ribosomal protein bL12 family. In terms of assembly, homodimer. Part of the ribosomal stalk of the 50S ribosomal subunit. Forms a multimeric L10(L12)X complex, where L10 forms an elongated spine to which 2 to 4 L12 dimers bind in a sequential fashion. Binds GTP-bound translation factors.

Forms part of the ribosomal stalk which helps the ribosome interact with GTP-bound translation factors. Is thus essential for accurate translation. In Staphylococcus aureus (strain Mu50 / ATCC 700699), this protein is Large ribosomal subunit protein bL12.